A 184-amino-acid chain; its full sequence is Photosystem I assembly protein Ycf4 (184 aa).

The next 2 membrane-spanning stretches (helical) occupy residues 22–42 (FCWA…GTSS) and 57–77 (IIFF…LFIS).

It belongs to the Ycf4 family.

It localises to the plastid. The protein localises to the chloroplast thylakoid membrane. In terms of biological role, seems to be required for the assembly of the photosystem I complex. The protein is Photosystem I assembly protein Ycf4 of Lobularia maritima (Sweet alyssum).